The chain runs to 202 residues: GTP cyclohydrolase 1 (202 aa).

Zn(2+)-binding residues include Cys-90, His-93, and Cys-163.

It belongs to the GTP cyclohydrolase I family. As to quaternary structure, homomer.

The catalysed reaction is GTP + H2O = 7,8-dihydroneopterin 3'-triphosphate + formate + H(+). The protein operates within cofactor biosynthesis; 7,8-dihydroneopterin triphosphate biosynthesis; 7,8-dihydroneopterin triphosphate from GTP: step 1/1. The sequence is that of GTP cyclohydrolase 1 from Mycolicibacterium gilvum (strain PYR-GCK) (Mycobacterium gilvum (strain PYR-GCK)).